Here is a 32-residue protein sequence, read N- to C-terminus: Cytochrome b6-f complex subunit 8 (32 aa).

Residues 6 to 26 (IVSLAWAALMVVFTFSLSLVV) form a helical membrane-spanning segment.

It belongs to the PetN family. The 4 large subunits of the cytochrome b6-f complex are cytochrome b6, subunit IV (17 kDa polypeptide, PetD), cytochrome f and the Rieske protein, while the 4 small subunits are PetG, PetL, PetM and PetN. The complex functions as a dimer.

The protein resides in the plastid. It is found in the chloroplast thylakoid membrane. Functionally, component of the cytochrome b6-f complex, which mediates electron transfer between photosystem II (PSII) and photosystem I (PSI), cyclic electron flow around PSI, and state transitions. The protein is Cytochrome b6-f complex subunit 8 of Illicium oligandrum (Star anise).